Consider the following 626-residue polypeptide: Cysteine desulfurase (626 aa).

Disordered stretches follow at residues 1–21 (MTNT…SDPF) and 41–64 (AGVS…PTTS). A cargo-loading domain region spans residues 1–225 (MTNTVPSVPA…AGAVGFDIHQ (225 aa)). Residues 226 to 626 (VRRDFPILQE…RRIQTGSLAL (401 aa)) are cysteine desulfurase domain. Lys444 carries the post-translational modification N6-(pyridoxal phosphate)lysine. Cys582 acts as the Cysteine persulfide intermediate in catalysis.

Belongs to the class-V pyridoxal-phosphate-dependent aminotransferase family. Csd subfamily. There are 1-2 copies of this protein in each type 2A encapsulin shell. The cofactor is pyridoxal 5'-phosphate.

The protein resides in the encapsulin nanocompartment. It carries out the reaction (sulfur carrier)-H + L-cysteine = (sulfur carrier)-SH + L-alanine. Its activity is regulated as follows. Encapsulated enzyme is 7-fold more active than encapsulated enzyme. Cargo protein of a type 2A encapsulin nanocompartment probably involved in sulfur metabolism. Cysteine desulfurases mobilize the sulfur from L-cysteine to yield L-alanine, an essential step in sulfur metabolism for biosynthesis of a variety of sulfur-containing biomolecules. The sequence is that of Cysteine desulfurase from Synechococcus elongatus (strain ATCC 33912 / PCC 7942 / FACHB-805) (Anacystis nidulans R2).